A 556-amino-acid polypeptide reads, in one-letter code: Cell wall integrity and stress response component 3 (556 aa).

Residues 1-38 (MERVWFAKLTNKGTIKIGYISFILLSLLCQSLIGLVNA) form the signal peptide. The region spanning 39-132 (DFNYEGCYSA…SSYMNVYVNA (94 aa)) is the WSC domain. At 39–384 (DFNYEGCYSA…QRLSGGAIAG (346 aa)) the chain is on the extracellular side. An N-linked (GlcNAc...) asparagine glycan is attached at asparagine 84. 2 stretches are compositionally biased toward low complexity: residues 142–169 (SSSK…SSTT) and 184–257 (TTVS…STTS). Disordered stretches follow at residues 142–257 (SSSK…STTS) and 269–312 (TLSS…PSTS). N-linked (GlcNAc...) asparagine glycosylation is found at asparagine 367 and asparagine 370. The helical transmembrane segment at 385–405 (IVIGVVFGVIFIILILLFLIW) threads the bilayer. Over 406 to 556 (RRRKSHDQLD…LSSTVSHNRA (151 aa)) the chain is Cytoplasmic. Disordered stretches follow at residues 425–444 (YSFG…SGTT) and 534–556 (LQVV…HNRA). Positions 546–556 (ELSSTVSHNRA) are enriched in polar residues.

It localises to the membrane. The sequence is that of Cell wall integrity and stress response component 3 (WSC3) from Saccharomyces cerevisiae (strain ATCC 204508 / S288c) (Baker's yeast).